A 351-amino-acid chain; its full sequence is Type II restriction enzyme NmeDI (351 aa).

It carries out the reaction Endonucleolytic cleavage of DNA to give specific double-stranded fragments with terminal 5'-phosphates.. A P subtype restriction enzyme that recognizes the double-stranded sequence 5'-N(12)RCCGGYN(12)-3' and cleaves on both sides of the recognition sequence. The sequence is that of Type II restriction enzyme NmeDI (nmeDIRP) from Neisseria meningitidis serogroup C.